Here is a 95-residue protein sequence, read N- to C-terminus: Co-chaperonin GroES (95 aa).

Belongs to the GroES chaperonin family. In terms of assembly, heptamer of 7 subunits arranged in a ring. Interacts with the chaperonin GroEL.

It localises to the cytoplasm. Together with the chaperonin GroEL, plays an essential role in assisting protein folding. The GroEL-GroES system forms a nano-cage that allows encapsulation of the non-native substrate proteins and provides a physical environment optimized to promote and accelerate protein folding. GroES binds to the apical surface of the GroEL ring, thereby capping the opening of the GroEL channel. The chain is Co-chaperonin GroES from Rickettsia felis (strain ATCC VR-1525 / URRWXCal2) (Rickettsia azadi).